The following is a 265-amino-acid chain: ATP synthase subunit a (265 aa).

The next 5 membrane-spanning stretches (helical) occupy residues 25–45 (FWAV…LFLW), 88–108 (IAPL…MDLI), 142–162 (DLNT…IYSI), 207–227 (LFGN…IGFW), and 233–253 (FAWA…FMML).

The protein belongs to the ATPase A chain family. F-type ATPases have 2 components, CF(1) - the catalytic core - and CF(0) - the membrane proton channel. CF(1) has five subunits: alpha(3), beta(3), gamma(1), delta(1), epsilon(1). CF(0) has three main subunits: a(1), b(2) and c(9-12). The alpha and beta chains form an alternating ring which encloses part of the gamma chain. CF(1) is attached to CF(0) by a central stalk formed by the gamma and epsilon chains, while a peripheral stalk is formed by the delta and b chains.

The protein localises to the cell inner membrane. Its function is as follows. Key component of the proton channel; it plays a direct role in the translocation of protons across the membrane. This Idiomarina loihiensis (strain ATCC BAA-735 / DSM 15497 / L2-TR) protein is ATP synthase subunit a.